The primary structure comprises 177 residues: Large ribosomal subunit protein uL6 (177 aa).

The span at 152 to 171 shows a compositional bias: basic and acidic residues; it reads RPPEPYKGKGVRYDDEEVRR. Residues 152–177 are disordered; that stretch reads RPPEPYKGKGVRYDDEEVRRKEAKKK.

It belongs to the universal ribosomal protein uL6 family. In terms of assembly, part of the 50S ribosomal subunit.

Its function is as follows. This protein binds to the 23S rRNA, and is important in its secondary structure. It is located near the subunit interface in the base of the L7/L12 stalk, and near the tRNA binding site of the peptidyltransferase center. The chain is Large ribosomal subunit protein uL6 from Shewanella oneidensis (strain ATCC 700550 / JCM 31522 / CIP 106686 / LMG 19005 / NCIMB 14063 / MR-1).